The chain runs to 101 residues: Doublesex- and mab-3-related transcription factor 1 (101 aa).

Residues 1–13 constitute a DNA-binding region (DM); that stretch reads SLIAERQRVMAAQ. Positions 52–75 are enriched in low complexity; it reads CLLLESSSPTHSTSTVTTVSTSPS. Residues 52–79 form a disordered region; the sequence is CLLLESSSPTHSTSTVTTVSTSPSEGRM.

The protein belongs to the DMRT family.

Its subcellular location is the nucleus. Its function is as follows. May be required for testis development. This is Doublesex- and mab-3-related transcription factor 1 (DMRT1) from Alligator mississippiensis (American alligator).